The primary structure comprises 984 residues: Pre-mRNA-splicing factor cwf10 (984 aa).

The disordered stretch occupies residues 1 to 28 (MMEEDLYDEFGNYIGPENEEDEEELFPQ). The tr-type G domain maps to 139–402 (DDVRSFIVAG…HTLTISDEAE (264 aa)). Residues 148–155 (GHLHHGKS) are G1. 148-155 (GHLHHGKS) is a binding site for GTP. Residues 190 to 194 (VMSIK) form a G2 region. Positions 216–219 (DTPG) are G3. Residues 216–220 (DTPGH) and 270–273 (NKVD) contribute to the GTP site. Positions 270–273 (NKVD) are G4. The tract at residues 371–373 (QSL) is G5.

It belongs to the TRAFAC class translation factor GTPase superfamily. Classic translation factor GTPase family. EF-G/EF-2 subfamily. Belongs to the 40S cdc5-associated complex (or cwf complex), a spliceosome sub-complex reminiscent of a late-stage spliceosome composed of the U2, U5 and U6 snRNAs and at least brr2, cdc5, cwf2/prp3, cwf3/syf1, cwf4/syf3, cwf5/ecm2, spp42/cwf6, cwf7/spf27, cwf8, cwf9, cwf10, cwf11, cwf12, prp45/cwf13, cwf14, cwf15, cwf16, cwf17, cwf18, cwf19, cwf20, cwf21, cwf22, cwf23, cwf24, cwf25, cwf26, cyp7/cwf27, cwf28, cwf29/ist3, lea1, msl1, prp5/cwf1, prp10, prp12/sap130, prp17, prp22, sap61, sap62, sap114, sap145, slu7, smb1, smd1, smd3, smf1, smg1 and syf2.

The protein resides in the cytoplasm. The protein localises to the nucleus. Functionally, component of the U5 snRNP complex required for pre-mRNA splicing. Binds GTP. The chain is Pre-mRNA-splicing factor cwf10 (cwf10) from Schizosaccharomyces pombe (strain 972 / ATCC 24843) (Fission yeast).